A 770-amino-acid chain; its full sequence is Elongation factor G, mitochondrial (770 aa).

A mitochondrion-targeting transit peptide spans 1–24 (MLKLSFRSLTSRLPRLSTLVVRGY). Residues 57 to 353 (KQIRNIGISA…AVCDYLPNPS (297 aa)) form the tr-type G domain. GTP is bound by residues 66–73 (AHIDSGKT), 151–155 (DTPGH), and 205–208 (NKMD).

Belongs to the TRAFAC class translation factor GTPase superfamily. Classic translation factor GTPase family. EF-G/EF-2 subfamily.

It is found in the mitochondrion. It participates in protein biosynthesis; polypeptide chain elongation. Mitochondrial GTPase that catalyzes the GTP-dependent ribosomal translocation step during translation elongation. During this step, the ribosome changes from the pre-translocational (PRE) to the post-translocational (POST) state as the newly formed A-site-bound peptidyl-tRNA and P-site-bound deacylated tRNA move to the P and E sites, respectively. Catalyzes the coordinated movement of the two tRNA molecules, the mRNA and conformational changes in the ribosome. This chain is Elongation factor G, mitochondrial (mef1), found in Schizosaccharomyces pombe (strain 972 / ATCC 24843) (Fission yeast).